Consider the following 82-residue polypeptide: Putative defensin-like protein 191 (82 aa).

Residues 1-28 (MAKSVNATGFITYMVIFLILTGISRVKA) form the signal peptide. 4 disulfides stabilise this stretch: C33/C79, C46/C65, C51/C74, and C55/C76.

It belongs to the DEFL family.

Its subcellular location is the secreted. The sequence is that of Putative defensin-like protein 191 from Arabidopsis thaliana (Mouse-ear cress).